Here is a 501-residue protein sequence, read N- to C-terminus: Sodium-coupled neutral amino acid symporter 2 (501 aa).

The disordered stretch occupies residues 1–26 (MSSAEMGKFDISPDEDSSSYSSNSND). The Cytoplasmic portion of the chain corresponds to 1 to 77 (MSSAEMGKFD…HPGTTSFGMS (77 aa)). Positions 1-97 (MSSAEMGKFD…SGILGLSYAM (97 aa)) are regulates protein turnover upon amino acid deprivation. The helical transmembrane segment at 78–97 (VFNLSNAIVGSGILGLSYAM) threads the bilayer. Asparagine 83 provides a ligand contact to Na(+). Residues 98–103 (ANTGIA) are Extracellular-facing. The chain crosses the membrane as a helical span at residues 104-124 (LFVILLLVVSILSLYSVHLLL). The Cytoplasmic segment spans residues 125-159 (KTANEGGSLLYEQLGMKAFGMPGKLAASGSITMQN). A helical membrane pass occupies residues 160 to 178 (IGAMSSYLFIVKYELPLVI). Over 179-189 (KTFMNIEENAG) the chain is Extracellular. A helical membrane pass occupies residues 190 to 210 (HWYLNGDYLVLLVSVILILPL). At 211–218 (SLLKNLGY) the chain is on the cytoplasmic side. A helical transmembrane segment spans residues 219 to 239 (LGYTSGFSLLCMVFFLIVVIW). The Extracellular segment spans residues 240–287 (KMFQIPCPMESDIINATLINATLAPFADENITISDACKPEYFIFNSQT). A disulfide bond links cysteine 246 and cysteine 276. Asparagine 254 and asparagine 259 each carry an N-linked (GlcNAc...) asparagine glycan. Residues 288-308 (VYAVPILTFSFVCHPAILPIY) traverse the membrane as a helical segment. Over 309–324 (EELKSRSRKRMMNVSY) the chain is Cytoplasmic. The chain crosses the membrane as a helical span at residues 325 to 345 (VSFFAMFLMYLLAALFGYLTF). At 346–366 (YGRVESELLHTYSAFLGADIL) the chain is on the extracellular side. A helical membrane pass occupies residues 367 to 387 (LLIVRLAVLMAVTLTVPVVIF). Threonine 381 provides a ligand contact to Na(+). The Cytoplasmic segment spans residues 388–408 (PIRSSVTQLLWAGKEFSWWRH). The chain crosses the membrane as a helical span at residues 409 to 429 (CSITVVLLAFTNVLVIFVPTI). Topologically, residues 430–431 (RD) are extracellular. The chain crosses the membrane as a helical span at residues 432-452 (IFGFIGASAAAMLIFILPSAF). Over 453–467 (YIKLVKKEPMKSVQK) the chain is Cytoplasmic. The helical transmembrane segment at 468–490 (IGAALFFLSGILVMTGCMTLIIL) threads the bilayer. The Extracellular segment spans residues 491 to 501 (DWIHTDASDGH).

The protein belongs to the amino acid/polyamine transporter 2 family.

Its subcellular location is the cell membrane. It carries out the reaction L-alanine(in) + Na(+)(in) = L-alanine(out) + Na(+)(out). It catalyses the reaction glycine(in) + Na(+)(in) = glycine(out) + Na(+)(out). The enzyme catalyses L-serine(in) + Na(+)(in) = L-serine(out) + Na(+)(out). The catalysed reaction is L-proline(in) + Na(+)(in) = L-proline(out) + Na(+)(out). It carries out the reaction L-methionine(in) + Na(+)(in) = L-methionine(out) + Na(+)(out). It catalyses the reaction L-histidine(in) + Na(+)(in) = L-histidine(out) + Na(+)(out). The enzyme catalyses L-asparagine(in) + Na(+)(in) = L-asparagine(out) + Na(+)(out). The catalysed reaction is L-glutamine(in) + Na(+)(in) = L-glutamine(out) + Na(+)(out). It carries out the reaction L-threonine(in) + Na(+)(in) = L-threonine(out) + Na(+)(out). It catalyses the reaction L-leucine(in) + Na(+)(in) = L-leucine(out) + Na(+)(out). The enzyme catalyses L-phenylalanine(in) + Na(+)(in) = L-phenylalanine(out) + Na(+)(out). With respect to regulation, inhibited by N-methyl-D-glucamine. Inhibited by choline. Allosteric regulation of sodium ions binding by pH. Symporter that cotransports neutral amino acids and sodium ions from the extracellular to the intracellular side of the cell membrane. The transport is pH-sensitive, Li(+)-intolerant, electrogenic, driven by the Na(+) electrochemical gradient and cotransports of neutral amino acids and sodium ions with a stoichiometry of 1:1. This Gallus gallus (Chicken) protein is Sodium-coupled neutral amino acid symporter 2.